We begin with the raw amino-acid sequence, 402 residues long: D-galactonate dehydratase family member RspA (402 aa).

Residues Asn37 and His122 each coordinate substrate. Tyr159 (proton donor/acceptor) is an active-site residue. Asp210 is a binding site for Mg(2+). His212 acts as the Proton donor/acceptor in catalysis. Positions 236 and 262 each coordinate Mg(2+). Glu262, Arg283, His312, Asp316, and Glu339 together coordinate substrate.

It belongs to the mandelate racemase/muconate lactonizing enzyme family. GalD subfamily. Mg(2+) is required as a cofactor.

It carries out the reaction D-mannonate = 2-dehydro-3-deoxy-D-gluconate + H2O. In terms of biological role, has low D-mannonate dehydratase activity (in vitro), suggesting that this is not a physiological substrate and that it has no significant role in D-mannonate degradation in vivo. Has no detectable activity with a panel of 70 other acid sugars (in vitro). This chain is D-galactonate dehydratase family member RspA (rspA), found in Cellvibrio japonicus (strain Ueda107) (Pseudomonas fluorescens subsp. cellulosa).